The sequence spans 52 residues: Eukaryotic translation initiation factor 5A (52 aa).

Lysine 42 is subject to Hypusine.

This sequence belongs to the eIF-5A family. Lys-42 undergoes hypusination, a unique post-translational modification that consists in the addition of a butylamino group from spermidine to lysine side chain, leading to the formation of the unusual amino acid hypusine. eIF-5As are the only known proteins to undergo this modification, which is essential for their function.

It localises to the cytoplasm. Functionally, translation factor that promotes translation elongation and termination, particularly upon ribosome stalling at specific amino acid sequence contexts. Binds between the exit (E) and peptidyl (P) site of the ribosome and promotes rescue of stalled ribosome: specifically required for efficient translation of polyproline-containing peptides as well as other motifs that stall the ribosome. Acts as a ribosome quality control (RQC) cofactor by joining the RQC complex to facilitate peptidyl transfer during CAT tailing step. The sequence is that of Eukaryotic translation initiation factor 5A from Schistosoma mansoni (Blood fluke).